The following is a 184-amino-acid chain: Ferredoxin-thioredoxin reductase subunit A2, chloroplastic (184 aa).

The transit peptide at 1–71 directs the protein to the chloroplast; it reads MTNSYALSPA…SRKNPKSTIR (71 aa).

The protein belongs to the ferredoxin thioredoxin reductase alpha subunit family. In terms of assembly, heterodimer of subunit A (variable subunit) and subunit B (catalytic subunit). Heterodimeric FTR forms a complex with ferredoxin and thioredoxin.

It is found in the plastid. The protein resides in the chloroplast. Functionally, variable subunit of the ferredoxin-thioredoxin reductase (FTR), which catalyzes the two-electron reduction of thioredoxins by the electrons provided by reduced ferredoxin. In Arabidopsis thaliana (Mouse-ear cress), this protein is Ferredoxin-thioredoxin reductase subunit A2, chloroplastic.